The following is a 925-amino-acid chain: Translation initiation factor IF-2 (925 aa).

The disordered stretch occupies residues 190 to 329 (PAAPTSEAAP…RRRDEREAAV (140 aa)). Composition is skewed to pro residues over residues 199 to 209 (PPEPEPTPLPA), 217 to 238 (PVRP…PAPR), and 279 to 288 (RPVPAQPAPQ). Low complexity predominate over residues 289–307 (TPTRSGSGIAKKGAITKAG). Basic and acidic residues predominate over residues 320–329 (RRRDEREAAV). A tr-type G domain is found at 417–589 (VRPPVVTIMG…LLLVADYELE (173 aa)). Positions 426-433 (GHVDHGKT) are G1. 426–433 (GHVDHGKT) lines the GTP pocket. Residues 451 to 455 (GITQH) form a G2 region. The tract at residues 476-479 (DTPG) is G3. Residues 476–480 (DTPGH) and 530–533 (NKVD) each bind GTP. Residues 530–533 (NKVD) form a G4 region. The interval 566–568 (SAK) is G5.

It belongs to the TRAFAC class translation factor GTPase superfamily. Classic translation factor GTPase family. IF-2 subfamily.

It is found in the cytoplasm. Functionally, one of the essential components for the initiation of protein synthesis. Protects formylmethionyl-tRNA from spontaneous hydrolysis and promotes its binding to the 30S ribosomal subunits. Also involved in the hydrolysis of GTP during the formation of the 70S ribosomal complex. In Gloeobacter violaceus (strain ATCC 29082 / PCC 7421), this protein is Translation initiation factor IF-2.